The following is a 70-amino-acid chain: Large ribosomal subunit protein bL31c (70 aa).

Belongs to the bacterial ribosomal protein bL31 family. Type A subfamily. Part of the 50S ribosomal subunit.

Its subcellular location is the plastid. The protein resides in the chloroplast. In terms of biological role, binds the 23S rRNA. This is Large ribosomal subunit protein bL31c from Emiliania huxleyi (Coccolithophore).